Here is a 168-residue protein sequence, read N- to C-terminus: uncharacterized protein (168 aa).

2 helical membrane-spanning segments follow: residues 41-61 (LLPW…LFFI) and 133-153 (KFVI…FFVL).

It localises to the cell membrane. This is an uncharacterized protein from Thermotoga maritima (strain ATCC 43589 / DSM 3109 / JCM 10099 / NBRC 100826 / MSB8).